A 668-amino-acid chain; its full sequence is UvrABC system protein B (668 aa).

The region spanning 27-413 (AGVQAGHRFQ…STQVVEQIIR (387 aa)) is the Helicase ATP-binding domain. Residue 40–47 (GATGTGKT) coordinates ATP. Positions 93-116 (YYDYYQPEAYIPVTDTYIEKSASI) match the Beta-hairpin motif. A Helicase C-terminal domain is found at 430–596 (QVDDLYGEIR…PIVKKTSNAI (167 aa)). The region spanning 628–663 (PPLIQDLEAKMKAAAQELAFEEAARYRDQIKRLRDR) is the UVR domain.

Belongs to the UvrB family. As to quaternary structure, forms a heterotetramer with UvrA during the search for lesions. Interacts with UvrC in an incision complex.

Its subcellular location is the cytoplasm. The UvrABC repair system catalyzes the recognition and processing of DNA lesions. A damage recognition complex composed of 2 UvrA and 2 UvrB subunits scans DNA for abnormalities. Upon binding of the UvrA(2)B(2) complex to a putative damaged site, the DNA wraps around one UvrB monomer. DNA wrap is dependent on ATP binding by UvrB and probably causes local melting of the DNA helix, facilitating insertion of UvrB beta-hairpin between the DNA strands. Then UvrB probes one DNA strand for the presence of a lesion. If a lesion is found the UvrA subunits dissociate and the UvrB-DNA preincision complex is formed. This complex is subsequently bound by UvrC and the second UvrB is released. If no lesion is found, the DNA wraps around the other UvrB subunit that will check the other stand for damage. The protein is UvrABC system protein B of Thermosynechococcus vestitus (strain NIES-2133 / IAM M-273 / BP-1).